The following is a 574-amino-acid chain: Choline transporter-like protein ctl1 (574 aa).

2 N-linked (GlcNAc...) asparagine glycosylation sites follow: Asn-40 and Asn-101. Helical transmembrane passes span Trp-144–Trp-164, Lys-189–Pro-209, Phe-211–Leu-231, Leu-246–Trp-266, Gln-291–Val-311, Trp-336–Leu-356, Tyr-396–Leu-416, and Thr-434–Met-456. The N-linked (GlcNAc...) asparagine glycan is linked to Asn-457. The next 2 helical transmembrane spans lie at Leu-485–Ile-505 and Phe-511–Ile-531. A glycan (N-linked (GlcNAc...) asparagine) is linked at Asn-558.

It belongs to the CTL (choline transporter-like) family. Interacts with atg9.

It is found in the endoplasmic reticulum membrane. The protein localises to the preautophagosomal structure membrane. Required for the normal organization of the preautophagosomal structure (PAS) and for the correct subcellular location of atg9. This Schizosaccharomyces pombe (strain 972 / ATCC 24843) (Fission yeast) protein is Choline transporter-like protein ctl1 (ctl1).